The sequence spans 91 residues: MRVNRQGIIVWFQHMKNIKQLRKHGNVIYASKTKRYAVIYVNQDEMDDVELKIINYPFVSKVERSQKPFVRTDYENAKPDKAKQYDYKMGI.

This sequence belongs to the UPF0298 family.

It localises to the cytoplasm. In Oceanobacillus iheyensis (strain DSM 14371 / CIP 107618 / JCM 11309 / KCTC 3954 / HTE831), this protein is UPF0298 protein OB1449.